Here is a 127-residue protein sequence, read N- to C-terminus: Small ribosomal subunit protein uS11 (127 aa).

It belongs to the universal ribosomal protein uS11 family. Part of the 30S ribosomal subunit. Interacts with proteins S7 and S18. Binds to IF-3.

Functionally, located on the platform of the 30S subunit, it bridges several disparate RNA helices of the 16S rRNA. Forms part of the Shine-Dalgarno cleft in the 70S ribosome. In Flavobacterium johnsoniae (strain ATCC 17061 / DSM 2064 / JCM 8514 / BCRC 14874 / CCUG 350202 / NBRC 14942 / NCIMB 11054 / UW101) (Cytophaga johnsonae), this protein is Small ribosomal subunit protein uS11.